Reading from the N-terminus, the 491-residue chain is Tyrosine 3-monooxygenase (491 aa).

Ser-19 is subject to Phosphoserine; by CaMK2. Position 31 is a phosphoserine (Ser-31). Ser-40 bears the Phosphoserine; by CaMK2 and PKA mark. His-324, His-329, and Glu-369 together coordinate Fe cation. Ser-465 is modified (phosphoserine).

Belongs to the biopterin-dependent aromatic amino acid hydroxylase family. In terms of assembly, homotetramer. Interacts (when phosphorylated at Ser-19) with YWHAG; one YWHAG dimer bounds to one TH tetramer and this interaction may influence the phosphorylation and dephosphorylation of other sites. Interacts with NT5DC2; the interaction results in reduced phosphorylation and decreased catalytic activity of TH. Requires Fe(2+) as cofactor. In terms of processing, phosphorylated on Ser-19, Ser-31 and Ser-40 by several protein kinases with different site specificities. Phosphorylation at Ser-31 and Ser-40 leads to an increase of TH activity. Phosphorylation at Ser-40 activates the enzyme and also counteracts the feedback inhibition of TH by catecholamines. Phosphorylation of Ser-19 and Ser-31 triggers the proteasomal degradation of TH through the ubiquitin-proteasome pathway. Phosphorylation at Ser-31 facilitates transport of TH from the soma to the nerve terminals via the microtubule network. Phosphorylation at Ser-19 induces the high-affinity binding to the 14-3-3 protein YWHAG; this interaction may influence the phosphorylation and dephosphorylation of other sites. Ser-19 increases the phosphorylation at Ser-40 in a hierarchical manner, leading to increased activity.

Its subcellular location is the cytoplasm. The protein resides in the perinuclear region. It is found in the nucleus. It localises to the cell projection. The protein localises to the axon. Its subcellular location is the cytoplasmic vesicle. The protein resides in the secretory vesicle. It is found in the synaptic vesicle. The enzyme catalyses (6R)-L-erythro-5,6,7,8-tetrahydrobiopterin + L-tyrosine + O2 = (4aS,6R)-4a-hydroxy-L-erythro-5,6,7,8-tetrahydrobiopterin + L-dopa. It participates in catecholamine biosynthesis; dopamine biosynthesis; dopamine from L-tyrosine: step 1/2. Its activity is regulated as follows. Inhibited in feedback fashion by the catecholamine neurotransmitters, especially by dopamine in competition with tetrahydrobiopterin. Phosphorylation of several Ser/Thr residues in the N-terminus regulates the catalytic activity. Ser-31 and Ser-40 are readily phosphorylated to activate the catalytic activity. A Cysteine modification induced by N-ethylmaleimide (NEM), inhibits tyrosine 3-monooxygenase activity through the modification of the Cys-170. Its function is as follows. Catalyzes the conversion of L-tyrosine to L-dihydroxyphenylalanine (L-Dopa), the rate-limiting step in the biosynthesis of catecholamines, dopamine, noradrenaline, and adrenaline. Uses tetrahydrobiopterin and molecular oxygen to convert tyrosine to L-Dopa. In addition to tyrosine, is able to catalyze the hydroxylation of phenylalanine and tryptophan with lower specificity. Positively regulates the regression of retinal hyaloid vessels during postnatal development. The sequence is that of Tyrosine 3-monooxygenase (TH) from Bos taurus (Bovine).